Here is a 64-residue protein sequence, read N- to C-terminus: Sperm protamine P1 (64 aa).

The disordered stretch occupies residues Met-1–Tyr-64.

It belongs to the protamine P1 family. As to expression, testis.

Its subcellular location is the nucleus. The protein resides in the chromosome. Functionally, protamines substitute for histones in the chromatin of sperm during the haploid phase of spermatogenesis. They compact sperm DNA into a highly condensed, stable and inactive complex. The chain is Sperm protamine P1 (PRM1) from Hypsiprymnodon moschatus (Musky rat kangaroo).